A 278-amino-acid chain; its full sequence is Potassium/proton antiporter CemA (278 aa).

The next 4 helical transmembrane spans lie at 61–81 (IFLL…FDFG), 155–175 (AVKN…LMIT), 203–223 (IILF…EVII), and 238–258 (FIFL…KYWI).

The protein belongs to the CemA family.

It localises to the plastid. The protein resides in the chloroplast inner membrane. The enzyme catalyses K(+)(in) + H(+)(out) = K(+)(out) + H(+)(in). In terms of biological role, contributes to K(+)/H(+) antiport activity by supporting proton efflux to control proton extrusion and homeostasis in chloroplasts in a light-dependent manner to modulate photosynthesis. Prevents excessive induction of non-photochemical quenching (NPQ) under continuous-light conditions. Indirectly promotes efficient inorganic carbon uptake into chloroplasts. In Porphyra purpurea (Red seaweed), this protein is Potassium/proton antiporter CemA.